The following is an 862-amino-acid chain: uncharacterized protein (862 aa).

The signal sequence occupies residues 1–25 (MKPRPYSVFLFLHIVFYSLLSAVNG). Over 26–61 (SPSLDYFETCSNFVPRAGIPTFSPYAVIKNFDEVNR) the chain is Lumenal. A helical transmembrane segment spans residues 62–82 (MYYIQVVGNLSGVITIVGGNG). Over 83–187 (SHIHAASVYS…STTLYYFYPV (105 aa)) the chain is Cytoplasmic. The helical transmembrane segment at 188 to 208 (ISYLVVVSLAYVSFSIIYALF) threads the bilayer. The Lumenal portion of the chain corresponds to 209-230 (LNPWTGSLDPFKSIFNFNMDPD). The helical transmembrane segment at 231–250 (ALRLTSLGFFDFVQYLQFAV) threads the bilayer. Residues 251-256 (STAQVS) are Cytoplasmic-facing. A helical membrane pass occupies residues 257–277 (VMFPKFYINIMAALSWGTALF). Over 278-329 (RFPIFSEPAEYQFADFADLSVASSSYADYLPKSYGMYSFLDSIGIGTACWLP) the chain is Lumenal. The chain crosses the membrane as a helical span at residues 330-350 (FLIVMVIYLFAALFVALLVIF). Residues 351–372 (LKWLMSRIFNETIAETRWDTWS) are Cytoplasmic-facing. Residues 373 to 393 (FIAGSLIRLYFLTYFPTVAYM) traverse the membrane as a helical segment. Residues 394–404 (SFQFVAPPTGY) lie on the Lumenal side of the membrane. Residues 405–425 (EIIPVLWFIFFGIFIPVYLYM) form a helical membrane-spanning segment. Residues 426-457 (NLAFVEPSSKLLEDQTYLHLFGSIYNSFREER) are Cytoplasmic-facing. Residues 458 to 480 (VMFWIFPIAVQFMRGITVGVIGS) form a helical membrane-spanning segment. The Lumenal segment spans residues 481–483 (SGS). Residues 484–503 (AQLAIFFILEVANVVAYAYV) form a helical membrane-spanning segment. The Cytoplasmic portion of the chain corresponds to 504–514 (RPHFPQTSMNT). Residues 515 to 535 (LNTFISTMRLITVILMIPLDP) traverse the membrane as a helical segment. Residues 536 to 545 (RLKVLGISRD) lie on the Lumenal side of the membrane. The chain crosses the membrane as a helical span at residues 546 to 566 (LLAYAILFIHIMVCILFLLLS). Topologically, residues 567–862 (TQRFMEVSAR…AESAWSIPHP (296 aa)) are cytoplasmic. Residues 668–686 (QASSLVPSKNNTASSSSLM) are compositionally biased toward polar residues. 2 disordered regions span residues 668 to 717 (QASS…SVRK) and 815 to 862 (VLRS…IPHP). A compositionally biased stretch (low complexity) spans 689 to 700 (SPVTPSSPYSTS). The segment covering 834-850 (EPSRDEQYSMERKKTDD) has biased composition (basic and acidic residues).

The protein belongs to the transient receptor potential (TRP) ion channel family.

The protein localises to the cytoplasm. Its subcellular location is the golgi apparatus membrane. This is an uncharacterized protein from Schizosaccharomyces pombe (strain 972 / ATCC 24843) (Fission yeast).